A 212-amino-acid polypeptide reads, in one-letter code: Large ribosomal subunit protein uL3 (212 aa).

A disordered region spans residues 133-156 (SMTHGSKNHRLPGSTGAGTTPGRV).

It belongs to the universal ribosomal protein uL3 family. Part of the 50S ribosomal subunit. Forms a cluster with proteins L14 and L19.

One of the primary rRNA binding proteins, it binds directly near the 3'-end of the 23S rRNA, where it nucleates assembly of the 50S subunit. This Crocosphaera subtropica (strain ATCC 51142 / BH68) (Cyanothece sp. (strain ATCC 51142)) protein is Large ribosomal subunit protein uL3.